We begin with the raw amino-acid sequence, 335 residues long: Tetraacyldisaccharide 4'-kinase (335 aa).

62-69 (NVGGTGKT) is an ATP binding site.

This sequence belongs to the LpxK family.

The enzyme catalyses a lipid A disaccharide + ATP = a lipid IVA + ADP + H(+). It functions in the pathway glycolipid biosynthesis; lipid IV(A) biosynthesis; lipid IV(A) from (3R)-3-hydroxytetradecanoyl-[acyl-carrier-protein] and UDP-N-acetyl-alpha-D-glucosamine: step 6/6. Functionally, transfers the gamma-phosphate of ATP to the 4'-position of a tetraacyldisaccharide 1-phosphate intermediate (termed DS-1-P) to form tetraacyldisaccharide 1,4'-bis-phosphate (lipid IVA). In Methylobacillus flagellatus (strain ATCC 51484 / DSM 6875 / VKM B-1610 / KT), this protein is Tetraacyldisaccharide 4'-kinase.